We begin with the raw amino-acid sequence, 510 residues long: Probable serine/threonine-protein kinase 2 (510 aa).

The Protein kinase domain occupies 111-364 (YVLNKKIGKG…ALQALGHQWF (254 aa)). ATP is bound by residues 117–125 (IGKGSFSTA) and Lys-140. The active-site Proton acceptor is the Asp-230. A disordered region spans residues 408-428 (NDDIYNNNNNNNQLDPNKNHK).

This sequence belongs to the protein kinase superfamily. Ser/Thr protein kinase family.

Its subcellular location is the membrane. The enzyme catalyses L-seryl-[protein] + ATP = O-phospho-L-seryl-[protein] + ADP + H(+). It carries out the reaction L-threonyl-[protein] + ATP = O-phospho-L-threonyl-[protein] + ADP + H(+). The sequence is that of Probable serine/threonine-protein kinase 2 (PK2) from Plasmodium falciparum (isolate K1 / Thailand).